Here is a 192-residue protein sequence, read N- to C-terminus: MPSLLLASSSSYRRELLARLRLPFTCRSPDIDESRRPDEAAFDLVQRLAREKAEALTAEHHHHLIIGSDQVAVLDEQVLGKPHSFERALEQLTAASGKSVTFLTGLALFNSSTGECQVDCVPFTVHMRELDRASIERYLHAEQPYDCAGSFKAEGLGVSLFRSTEGSDATSLIGLPLIRLVDMLIKEGVSVP.

Asp-69 (proton acceptor) is an active-site residue.

This sequence belongs to the Maf family. YceF subfamily. A divalent metal cation serves as cofactor.

Its subcellular location is the cytoplasm. The enzyme catalyses N(7)-methyl-GTP + H2O = N(7)-methyl-GMP + diphosphate + H(+). Functionally, nucleoside triphosphate pyrophosphatase that hydrolyzes 7-methyl-GTP (m(7)GTP). May have a dual role in cell division arrest and in preventing the incorporation of modified nucleotides into cellular nucleic acids. The protein is 7-methyl-GTP pyrophosphatase of Pseudomonas syringae pv. syringae (strain B728a).